A 340-amino-acid chain; its full sequence is tRNA N6-adenosine threonylcarbamoyltransferase (340 aa).

Fe cation-binding residues include His113 and His117. Residues Leu135–Gly139, Asp169, Gly182, Asp186, and Asn274 contribute to the substrate site. Asp302 contributes to the Fe cation binding site.

Belongs to the KAE1 / TsaD family. Fe(2+) serves as cofactor.

The protein resides in the cytoplasm. The enzyme catalyses L-threonylcarbamoyladenylate + adenosine(37) in tRNA = N(6)-L-threonylcarbamoyladenosine(37) in tRNA + AMP + H(+). Required for the formation of a threonylcarbamoyl group on adenosine at position 37 (t(6)A37) in tRNAs that read codons beginning with adenine. Is involved in the transfer of the threonylcarbamoyl moiety of threonylcarbamoyl-AMP (TC-AMP) to the N6 group of A37, together with TsaE and TsaB. TsaD likely plays a direct catalytic role in this reaction. The sequence is that of tRNA N6-adenosine threonylcarbamoyltransferase from Mycolicibacterium vanbaalenii (strain DSM 7251 / JCM 13017 / BCRC 16820 / KCTC 9966 / NRRL B-24157 / PYR-1) (Mycobacterium vanbaalenii).